The primary structure comprises 130 residues: Small ribosomal subunit protein uS8 (130 aa).

It belongs to the universal ribosomal protein uS8 family. In terms of assembly, part of the 30S ribosomal subunit. Contacts proteins S5 and S12.

Functionally, one of the primary rRNA binding proteins, it binds directly to 16S rRNA central domain where it helps coordinate assembly of the platform of the 30S subunit. In Opitutus terrae (strain DSM 11246 / JCM 15787 / PB90-1), this protein is Small ribosomal subunit protein uS8.